The chain runs to 71 residues: Protein CYSTEINE-RICH TRANSMEMBRANE MODULE 3 (71 aa).

A disordered region spans residues 30 to 49 (VMMKDSPQTVQPPHEGQSKG). The chain crosses the membrane as a helical span at residues 48 to 64 (KGSGGFLRGCLAAMCCC).

The protein belongs to the CYSTM1 family. Heterodimers. Interacts with CYSTM7 and WIH1/CYSTM13. Mostly expressed in leaves and flowers and, to a lower extent, in stems, siliques, shoots and roots.

Its subcellular location is the cell membrane. The protein localises to the cytoplasm. It localises to the mitochondrion. In terms of biological role, negatively regulates salt stress responses and Na(+) homeostasis. Prevents Na(+) efflux, disturbs reactive oxygen species (ROS) homeostasis, and represses the expression of nuclear salt stress-responsive genes. Involved in resistance to abiotic stress. This chain is Protein CYSTEINE-RICH TRANSMEMBRANE MODULE 3, found in Arabidopsis thaliana (Mouse-ear cress).